We begin with the raw amino-acid sequence, 273 residues long: Putative pyruvate, phosphate dikinase regulatory protein (273 aa).

Gly153–Ser160 lines the ADP pocket.

This sequence belongs to the pyruvate, phosphate/water dikinase regulatory protein family. PDRP subfamily.

It carries out the reaction N(tele)-phospho-L-histidyl/L-threonyl-[pyruvate, phosphate dikinase] + ADP = N(tele)-phospho-L-histidyl/O-phospho-L-threonyl-[pyruvate, phosphate dikinase] + AMP + H(+). It catalyses the reaction N(tele)-phospho-L-histidyl/O-phospho-L-threonyl-[pyruvate, phosphate dikinase] + phosphate + H(+) = N(tele)-phospho-L-histidyl/L-threonyl-[pyruvate, phosphate dikinase] + diphosphate. Bifunctional serine/threonine kinase and phosphorylase involved in the regulation of the pyruvate, phosphate dikinase (PPDK) by catalyzing its phosphorylation/dephosphorylation. The sequence is that of Putative pyruvate, phosphate dikinase regulatory protein from Ehrlichia canis (strain Jake).